Consider the following 430-residue polypeptide: Small ribosomal subunit protein uS5m (430 aa).

The region spanning 218-282 (FDTRILEVRN…NRAVHHLHYI (65 aa)) is the S5 DRBM domain.

Belongs to the universal ribosomal protein uS5 family. In terms of assembly, component of the mitochondrial small ribosomal subunit (mt-SSU). Mature mammalian 55S mitochondrial ribosomes consist of a small (28S) and a large (39S) subunit. The 28S small subunit contains a 12S ribosomal RNA (12S mt-rRNA) and 30 different proteins. The 39S large subunit contains a 16S rRNA (16S mt-rRNA), a copy of mitochondrial valine transfer RNA (mt-tRNA(Val)), which plays an integral structural role, and 52 different proteins.

The protein resides in the mitochondrion. In Homo sapiens (Human), this protein is Small ribosomal subunit protein uS5m (MRPS5).